The sequence spans 505 residues: AMP phosphorylase (505 aa).

AMP-binding positions include Gly170, Ser196–Ser201, and Thr205. The Proton donor role is filled by Asp258. Ser266 and Lys290 together coordinate AMP.

This sequence belongs to the thymidine/pyrimidine-nucleoside phosphorylase family. Type 2 subfamily.

It carries out the reaction AMP + phosphate = alpha-D-ribose 1,5-bisphosphate + adenine. It catalyses the reaction CMP + phosphate = cytosine + alpha-D-ribose 1,5-bisphosphate. The enzyme catalyses UMP + phosphate = alpha-D-ribose 1,5-bisphosphate + uracil. Functionally, catalyzes the conversion of AMP and phosphate to adenine and ribose 1,5-bisphosphate (R15P). Exhibits phosphorylase activity toward CMP and UMP in addition to AMP. Functions in an archaeal AMP degradation pathway, together with R15P isomerase and RubisCO. This chain is AMP phosphorylase, found in Methanococcus maripaludis (strain C5 / ATCC BAA-1333).